The chain runs to 327 residues: Zinc transport protein ZntB (327 aa).

The Cytoplasmic segment spans residues 1–273; it reads MEAIKGSDVN…ARRTYTMSLM (273 aa). A helical membrane pass occupies residues 274–294; that stretch reads AMVFLPSTFLTGLFGVNLGGI. Residues 295 to 300 are Periplasmic-facing; that stretch reads PGGGWQ. A helical transmembrane segment spans residues 301–321; that stretch reads FGFSIFCILLVVLIGGVALWL. Residues 322–327 lie on the Cytoplasmic side of the membrane; sequence YRSKWL.

This sequence belongs to the CorA metal ion transporter (MIT) (TC 1.A.35) family.

It localises to the cell inner membrane. It carries out the reaction Zn(2+)(out) + H(+)(out) = Zn(2+)(in) + H(+)(in). In terms of biological role, zinc transporter. Acts as a Zn(2+):proton symporter, which likely mediates zinc ion uptake. The chain is Zinc transport protein ZntB from Shigella flexneri serotype 5b (strain 8401).